We begin with the raw amino-acid sequence, 33 residues long: Photosystem II reaction center protein Psb30 (33 aa).

The chain crosses the membrane as a helical span at residues I5 to L25.

It belongs to the Psb30/Ycf12 family. In terms of assembly, PSII is composed of 1 copy each of membrane proteins PsbA, PsbB, PsbC, PsbD, PsbE, PsbF, PsbH, PsbI, PsbJ, PsbK, PsbL, PsbM, PsbT, PsbX, PsbY, PsbZ, Psb30/Ycf12, peripheral proteins of the oxygen-evolving complex and a large number of cofactors. It forms dimeric complexes.

The protein resides in the plastid. It is found in the chloroplast thylakoid membrane. Functionally, a core subunit of photosystem II (PSII), probably helps stabilize the reaction center. In Chlorella vulgaris (Green alga), this protein is Photosystem II reaction center protein Psb30.